We begin with the raw amino-acid sequence, 141 residues long: Histone H2B (141 aa).

Basic and acidic residues predominate over residues 1 to 10 (MPPKAAEKKP). The disordered stretch occupies residues 1-49 (MPPKAAEKKPSTGGKAPAGGKAPAEKKEAGKKTAAAASGDKKKRGKTRK). Lys8 and Lys9 each carry N6-acetyllysine; alternate. Residues Lys8 and Lys9 each participate in a glycyl lysine isopeptide (Lys-Gly) (interchain with G-Cter in SUMO); alternate cross-link. A compositionally biased stretch (low complexity) spans 11–22 (STGGKAPAGGKA). Lys15 carries the N6-acetyllysine modification. Lys26 bears the N6-acetyllysine; alternate mark. Residue Lys26 forms a Glycyl lysine isopeptide (Lys-Gly) (interchain with G-Cter in SUMO); alternate linkage. A Glycyl lysine isopeptide (Lys-Gly) (interchain with G-Cter in SUMO) cross-link involves residue Lys27. Residue Lys135 forms a Glycyl lysine isopeptide (Lys-Gly) (interchain with G-Cter in ubiquitin) linkage.

This sequence belongs to the histone H2B family. In terms of assembly, the nucleosome is a histone octamer containing two molecules each of H2A, H2B, H3 and H4 assembled in one H3-H4 heterotetramer and two H2A-H2B heterodimers. The octamer wraps approximately 147 bp of DNA. Monoubiquitinated by the ubc2-bre1 complex to form H2BK123ub1. H2BK123ub1 gives a specific tag for epigenetic transcriptional activation and is also prerequisite for H3K4me and H3K79me formation. H2BK123ub1 also modulates the formation of double-strand breaks during meiosis and is a prerequisite for DNA-damage checkpoint activation. In terms of processing, acetylated by gcn5 to form H2BK11ac and H2BK16ac. H2BK16ac can also be formed by esa1. Acetylation of N-terminal lysines and particularly formation of H2BK11acK16ac has a positive effect on transcription. Post-translationally, sumoylation to form H2BK6su or H2BK7su, and probably also H2BK16su or H2BK17su, occurs preferentially near the telomeres and represses gene transcription.

Its subcellular location is the nucleus. The protein resides in the chromosome. Core component of nucleosome. Nucleosomes wrap and compact DNA into chromatin, limiting DNA accessibility to the cellular machineries which require DNA as a template. Histones thereby play a central role in transcription regulation, DNA repair, DNA replication and chromosomal stability. DNA accessibility is regulated via a complex set of post-translational modifications of histones, also called histone code, and nucleosome remodeling. The protein is Histone H2B (htb1) of Aspergillus niger (strain ATCC MYA-4892 / CBS 513.88 / FGSC A1513).